The chain runs to 343 residues: Protein RecA (343 aa).

64 to 71 (GPESSGKT) contributes to the ATP binding site.

Belongs to the RecA family.

The protein resides in the cytoplasm. Can catalyze the hydrolysis of ATP in the presence of single-stranded DNA, the ATP-dependent uptake of single-stranded DNA by duplex DNA, and the ATP-dependent hybridization of homologous single-stranded DNAs. It interacts with LexA causing its activation and leading to its autocatalytic cleavage. This chain is Protein RecA, found in Bacillus cereus (strain B4264).